Reading from the N-terminus, the 250-residue chain is NAD-dependent protein deacylase 1 (250 aa).

The Deacetylase sirtuin-type domain maps to 1–250 (MRAVVELLAG…PELLRRAFPG (250 aa)). 19–39 (GAGVSAESGIPTFRDALGGLW) contacts NAD(+). Residues Tyr-64 and Arg-67 each coordinate substrate. An NAD(+)-binding site is contributed by 98-101 (QNVD). His-116 (proton acceptor) is an active-site residue. 4 residues coordinate Zn(2+): Cys-124, Cys-127, Cys-152, and Cys-155. NAD(+) is bound by residues 192-194 (GTS), 218-220 (NPQ), and Ala-236.

Belongs to the sirtuin family. Class III subfamily. Requires Zn(2+) as cofactor.

The protein localises to the cytoplasm. It carries out the reaction N(6)-acetyl-L-lysyl-[protein] + NAD(+) + H2O = 2''-O-acetyl-ADP-D-ribose + nicotinamide + L-lysyl-[protein]. The catalysed reaction is N(6)-succinyl-L-lysyl-[protein] + NAD(+) + H2O = 2''-O-succinyl-ADP-D-ribose + nicotinamide + L-lysyl-[protein]. Functionally, NAD-dependent lysine deacetylase and desuccinylase that specifically removes acetyl and succinyl groups on target proteins. Modulates the activities of several proteins which are inactive in their acylated form. The polypeptide is NAD-dependent protein deacylase 1 (Pseudomonas aeruginosa (strain ATCC 15692 / DSM 22644 / CIP 104116 / JCM 14847 / LMG 12228 / 1C / PRS 101 / PAO1)).